Reading from the N-terminus, the 495-residue chain is Glycerol kinase (495 aa).

T11 is a binding site for ADP. 3 residues coordinate ATP: T11, T12, and S13. T11 is a binding site for sn-glycerol 3-phosphate. R15 lines the ADP pocket. Sn-glycerol 3-phosphate is bound by residues R81, E82, Y133, and D242. Residues R81, E82, Y133, D242, and Q243 each contribute to the glycerol site. The ADP site is built by T264 and G307. ATP is bound by residues T264, G307, Q311, and G409. Residues G409 and N413 each contribute to the ADP site.

It belongs to the FGGY kinase family.

It catalyses the reaction glycerol + ATP = sn-glycerol 3-phosphate + ADP + H(+). Its pathway is polyol metabolism; glycerol degradation via glycerol kinase pathway; sn-glycerol 3-phosphate from glycerol: step 1/1. Its activity is regulated as follows. Inhibited by fructose 1,6-bisphosphate (FBP). Functionally, key enzyme in the regulation of glycerol uptake and metabolism. Catalyzes the phosphorylation of glycerol to yield sn-glycerol 3-phosphate. The protein is Glycerol kinase of Borrelia hermsii (strain HS1 / DAH).